A 297-amino-acid polypeptide reads, in one-letter code: Protoheme IX farnesyltransferase (297 aa).

9 helical membrane passes run 23-43 (VTQL…PGLP), 49-69 (VFGT…NCLI), 90-110 (ISAA…MLVL), 117-137 (LTMW…TVIL), 144-164 (NIVI…AAVA), 171-191 (AWVL…ALAL), 215-235 (RLHI…PYII), 238-258 (SGLL…AYAW), and 277-297 (ILYL…GLLA).

It belongs to the UbiA prenyltransferase family. Protoheme IX farnesyltransferase subfamily.

It is found in the cell inner membrane. It carries out the reaction heme b + (2E,6E)-farnesyl diphosphate + H2O = Fe(II)-heme o + diphosphate. The protein operates within porphyrin-containing compound metabolism; heme O biosynthesis; heme O from protoheme: step 1/1. Converts heme B (protoheme IX) to heme O by substitution of the vinyl group on carbon 2 of heme B porphyrin ring with a hydroxyethyl farnesyl side group. This is Protoheme IX farnesyltransferase from Bordetella petrii (strain ATCC BAA-461 / DSM 12804 / CCUG 43448).